Consider the following 75-residue polypeptide: Protein BsdD (75 aa).

Its function is as follows. Involved in the non-oxidative decarboxylation and detoxification of phenolic derivatives under both aerobic and anaerobic conditions, however the precise biochemical function of BsdD in metabolism of phenolic acid is unknown. The polypeptide is Protein BsdD (Bacillus subtilis (strain 168)).